The following is a 359-amino-acid chain: 1-deoxy-D-xylulose 5-phosphate reductoisomerase (359 aa).

NADPH-binding residues include threonine 12, glycine 13, serine 14, isoleucine 15, lysine 38, and asparagine 39. Position 105 (lysine 105) interacts with 1-deoxy-D-xylulose 5-phosphate. Glutamate 106 contacts NADPH. Aspartate 130 contributes to the Mn(2+) binding site. 1-deoxy-D-xylulose 5-phosphate contacts are provided by serine 131, glutamate 132, serine 152, and histidine 175. Position 132 (glutamate 132) interacts with Mn(2+). Glycine 181 lines the NADPH pocket. The 1-deoxy-D-xylulose 5-phosphate site is built by serine 188, asparagine 193, lysine 194, and glutamate 197. Mn(2+) is bound at residue glutamate 197.

Belongs to the DXR family. The cofactor is Mg(2+). Mn(2+) serves as cofactor.

It carries out the reaction 2-C-methyl-D-erythritol 4-phosphate + NADP(+) = 1-deoxy-D-xylulose 5-phosphate + NADPH + H(+). Its pathway is isoprenoid biosynthesis; isopentenyl diphosphate biosynthesis via DXP pathway; isopentenyl diphosphate from 1-deoxy-D-xylulose 5-phosphate: step 1/6. Functionally, catalyzes the NADPH-dependent rearrangement and reduction of 1-deoxy-D-xylulose-5-phosphate (DXP) to 2-C-methyl-D-erythritol 4-phosphate (MEP). The protein is 1-deoxy-D-xylulose 5-phosphate reductoisomerase of Pseudothermotoga lettingae (strain ATCC BAA-301 / DSM 14385 / NBRC 107922 / TMO) (Thermotoga lettingae).